The primary structure comprises 444 residues: Bystin (444 aa).

2 disordered regions span residues 1–37 (MAKK…HQKQ) and 53–85 (ALAQ…TAGE). The span at 24-34 (SRKRSKVPKTH) shows a compositional bias: basic residues. The span at 73–84 (AAFAVAGAATAG) shows a compositional bias: low complexity.

The protein belongs to the bystin family. In terms of assembly, component of the 40S pre-ribosome. In terms of tissue distribution, highly expressed in flowers and at lower levels in roots, hypocotyls, stems, leaves, siliques and seeds.

The protein localises to the nucleus. Its subcellular location is the nucleolus. It is found in the nucleoplasm. Essential protein required during embryogenesis and pollen development. Required for processing of 20S pre-rRNA precursor and biogenesis of 40S ribosomal subunits. The chain is Bystin from Arabidopsis thaliana (Mouse-ear cress).